Reading from the N-terminus, the 585-residue chain is Polyadenylate-binding protein, cytoplasmic and nuclear (585 aa).

The interval 14–37 (QLKIEEQTAPTTTESETPKVETSG) is disordered. 4 consecutive RRM domains span residues 38-116 (ASLY…WSQR), 126-203 (GNIY…LHVS), 219-296 (TNVY…RAQK), and 322-399 (VNLF…IAQR). The 80-residue stretch at 488 to 567 (GQFPRNGQQQ…AHAAYQKFKE (80 aa)) folds into the PABC domain.

Belongs to the polyadenylate-binding protein type-1 family.

It is found in the cytoplasm. Its subcellular location is the nucleus. Functionally, binds the poly(A) tail of mRNA. Appears to be an important mediator of the multiple roles of the poly(A) tail in mRNA biogenesis, stability and translation. In the nucleus, involved in both mRNA cleavage and polyadenylation. Is also required for efficient mRNA export to the cytoplasm. Acts in concert with a poly(A)-specific nuclease (PAN) to affect poly(A) tail shortening, which may occur concomitantly with either nucleocytoplasmic mRNA transport or translational initiation. In the cytoplasm, stimulates translation initiation and regulates mRNA decay through translation termination-coupled poly(A) shortening, probably mediated by PAN. In Eremothecium gossypii (strain ATCC 10895 / CBS 109.51 / FGSC 9923 / NRRL Y-1056) (Yeast), this protein is Polyadenylate-binding protein, cytoplasmic and nuclear (PAB1).